The following is a 1166-amino-acid chain: Serine-aspartate repeat-containing protein E (1166 aa).

Residues methionine 1 to alanine 52 form the signal peptide. The short motif at phenylalanine 23–serine 34 is the YSIRK-G/S signaling motif element. A ligand binding A region region spans residues alanine 53–lysine 606. Residues glutamate 54–proline 253 are disordered. Residues alanine 61–valine 75 show a composition bias toward basic and acidic residues. Over residues glutamate 77–asparagine 90 the composition is skewed to low complexity. Over residues isoleucine 92 to serine 108 the composition is skewed to basic and acidic residues. Polar residues predominate over residues asparagine 118 to glutamine 129. The span at asparagine 130–threonine 145 shows a compositional bias: basic and acidic residues. Over residues threonine 166–glutamate 178 the composition is skewed to low complexity. A compositionally biased stretch (polar residues) spans isoleucine 179–threonine 212. The span at serine 221–threonine 246 shows a compositional bias: basic and acidic residues. CNA-B domains lie at leucine 607 to proline 719, lysine 720 to proline 829, and lysine 830 to threonine 940. A disordered region spans residues valine 904–asparagine 1141. 2 stretches are compositionally biased toward acidic residues: residues threonine 908 to glutamate 918 and tyrosine 935 to serine 1105. The short motif at leucine 1129–glycine 1133 is the LPXTG sorting signal element. Position 1132 is a pentaglycyl murein peptidoglycan amidated threonine (threonine 1132). A propeptide spans glycine 1133–lysine 1166 (removed by sortase).

This sequence belongs to the serine-aspartate repeat-containing protein (SDr) family. In terms of assembly, interacts with host complement factor H/CFAH (via C-terminus). Interacts with host complement regulator C4BPA.

The protein resides in the secreted. It localises to the cell wall. Functionally, cell surface-associated calcium-binding protein which plays an important role in adhesion and pathogenesis. Contributes to the resistance to killing by innate immune components in blood and thus attenuates bacterial clearance by interacting with host complement factor H/CFAH and modulating its activity. Also inhibits bacterial opsonization and killing by interacting with host complement regulator C4BPA and thus inhibiting classical complement pathway activation. This Staphylococcus aureus (strain COL) protein is Serine-aspartate repeat-containing protein E (sdrE).